A 309-amino-acid chain; its full sequence is Elongation factor Ts (309 aa).

The interval 82 to 85 (TDFV) is involved in Mg(2+) ion dislocation from EF-Tu.

Belongs to the EF-Ts family.

It localises to the cytoplasm. Functionally, associates with the EF-Tu.GDP complex and induces the exchange of GDP to GTP. It remains bound to the aminoacyl-tRNA.EF-Tu.GTP complex up to the GTP hydrolysis stage on the ribosome. In Rickettsia massiliae (strain Mtu5), this protein is Elongation factor Ts.